The following is a 95-amino-acid chain: Co-chaperonin GroES (95 aa).

Belongs to the GroES chaperonin family. As to quaternary structure, heptamer of 7 subunits arranged in a ring. Interacts with the chaperonin GroEL.

It is found in the cytoplasm. Together with the chaperonin GroEL, plays an essential role in assisting protein folding. The GroEL-GroES system forms a nano-cage that allows encapsulation of the non-native substrate proteins and provides a physical environment optimized to promote and accelerate protein folding. GroES binds to the apical surface of the GroEL ring, thereby capping the opening of the GroEL channel. In Chlorobium limicola (strain DSM 245 / NBRC 103803 / 6330), this protein is Co-chaperonin GroES.